Here is a 137-residue protein sequence, read N- to C-terminus: Peptidyl-tRNA hydrolase ArfB (137 aa).

Residues Glu-102–Phe-137 are disordered.

It belongs to the prokaryotic/mitochondrial release factor family. In terms of assembly, associated with 70S ribosomes and polysomes.

It localises to the cytoplasm. It catalyses the reaction an N-acyl-L-alpha-aminoacyl-tRNA + H2O = an N-acyl-L-amino acid + a tRNA + H(+). Its function is as follows. Rescues stalled ribosomes. Can hydrolyze peptidyl-tRNA on ribosomes stalled by both non-stop mRNAs and mRNAs that contain rare codon clusters. This Pseudomonas putida (Arthrobacter siderocapsulatus) protein is Peptidyl-tRNA hydrolase ArfB (arfB).